The following is a 424-amino-acid chain: Kynureninase (424 aa).

Pyridoxal 5'-phosphate contacts are provided by residues leucine 106, threonine 107, 134–137, aspartate 219, histidine 222, and tyrosine 244; that span reads FPSD. At lysine 245 the chain carries N6-(pyridoxal phosphate)lysine. Pyridoxal 5'-phosphate is bound by residues tryptophan 274 and asparagine 302.

Belongs to the kynureninase family. In terms of assembly, homodimer. The cofactor is pyridoxal 5'-phosphate.

It catalyses the reaction L-kynurenine + H2O = anthranilate + L-alanine + H(+). It carries out the reaction 3-hydroxy-L-kynurenine + H2O = 3-hydroxyanthranilate + L-alanine + H(+). It functions in the pathway amino-acid degradation; L-kynurenine degradation; L-alanine and anthranilate from L-kynurenine: step 1/1. It participates in cofactor biosynthesis; NAD(+) biosynthesis; quinolinate from L-kynurenine: step 2/3. Functionally, catalyzes the cleavage of L-kynurenine (L-Kyn) and L-3-hydroxykynurenine (L-3OHKyn) into anthranilic acid (AA) and 3-hydroxyanthranilic acid (3-OHAA), respectively. The sequence is that of Kynureninase from Xanthomonas campestris pv. campestris (strain 8004).